We begin with the raw amino-acid sequence, 332 residues long: 2,3-bisphosphoglycerate-dependent phosphoglycerate mutase 2 (332 aa).

Residues 1–48 constitute a chloroplast transit peptide; sequence MATSTTMSHQAIGSVVSQRPFKASQFLKEPLNNVPMKFRQKRFKIEAT. Substrate-binding positions include 85-92, 98-99, R135, 189-192, K200, 216-217, and 260-261; these read RHGESLWN, TG, ERMY, RR, and GN. The active-site Tele-phosphohistidine intermediate is H86. The active-site Proton donor/acceptor is the E189.

Belongs to the phosphoglycerate mutase family. BPG-dependent PGAM subfamily.

Its subcellular location is the plastid. The protein resides in the chloroplast. It carries out the reaction (2R)-2-phosphoglycerate = (2R)-3-phosphoglycerate. Its pathway is carbohydrate degradation; glycolysis; pyruvate from D-glyceraldehyde 3-phosphate: step 3/5. Its function is as follows. Catalyzes the interconversion of 2-phosphoglycerate and 3-phosphoglycerate. In Arabidopsis thaliana (Mouse-ear cress), this protein is 2,3-bisphosphoglycerate-dependent phosphoglycerate mutase 2.